The chain runs to 509 residues: tRNA-2-methylthio-N(6)-dimethylallyladenosine synthase (509 aa).

Polar residues predominate over residues 1-15; sequence MNEQQRLASQQANAS. A disordered region spans residues 1-22; it reads MNEQQRLASQQANASTKKEEKD. The MTTase N-terminal domain maps to 66–184; sequence RKFYIRTYGC…LPYILKDAMF (119 aa). [4Fe-4S] cluster is bound by residues Cys75, Cys111, Cys145, Cys221, Cys225, and Cys228. A Radical SAM core domain is found at 207 to 437; sequence RRGDIKAWVN…NELVNEFSAK (231 aa). Residues 440-503 form the TRAM domain; that stretch reads KKYEGQIVEV…TWSLNGELVE (64 aa).

Belongs to the methylthiotransferase family. MiaB subfamily. Monomer. The cofactor is [4Fe-4S] cluster.

Its subcellular location is the cytoplasm. The catalysed reaction is N(6)-dimethylallyladenosine(37) in tRNA + (sulfur carrier)-SH + AH2 + 2 S-adenosyl-L-methionine = 2-methylsulfanyl-N(6)-dimethylallyladenosine(37) in tRNA + (sulfur carrier)-H + 5'-deoxyadenosine + L-methionine + A + S-adenosyl-L-homocysteine + 2 H(+). Functionally, catalyzes the methylthiolation of N6-(dimethylallyl)adenosine (i(6)A), leading to the formation of 2-methylthio-N6-(dimethylallyl)adenosine (ms(2)i(6)A) at position 37 in tRNAs that read codons beginning with uridine. The polypeptide is tRNA-2-methylthio-N(6)-dimethylallyladenosine synthase (Bacillus cytotoxicus (strain DSM 22905 / CIP 110041 / 391-98 / NVH 391-98)).